The chain runs to 114 residues: Large ribosomal subunit protein bL19 (114 aa).

It belongs to the bacterial ribosomal protein bL19 family.

Functionally, this protein is located at the 30S-50S ribosomal subunit interface and may play a role in the structure and function of the aminoacyl-tRNA binding site. The chain is Large ribosomal subunit protein bL19 from Acidithiobacillus ferrooxidans (strain ATCC 23270 / DSM 14882 / CIP 104768 / NCIMB 8455) (Ferrobacillus ferrooxidans (strain ATCC 23270)).